Consider the following 275-residue polypeptide: WIMGHMVNAIEQVDEFLDLGANAIEFDVDFDDDGVAKYTHHGIPCDCGRLCTKYAVFTEYLDYVRQVTTPGDPKFRKELVLLALDLKLQRIPSEKAYAAGVDVATKLLDHYWMRGWNGGRAYILLNIPLVEDYEFIRAFKDTLRKEGHEQYNAKVGINFTGNEDLDEIREVLEKLGEDEHIWQADGITSCFPRGTERLKKALEKRDTPGYKYISKVYAWTLVRSSIMRRSLRLGVDGVMSNYPDRVVKVLKEKEFSDKFRLATYADNPWEKFTPI.

The active site involves histidine 5. Glutamate 25 and aspartate 27 together coordinate Mg(2+). The Nucleophile role is filled by histidine 41. Disulfide bonds link cysteine 45–cysteine 51 and cysteine 47–cysteine 190. Aspartate 85 lines the Mg(2+) pocket.

The protein belongs to the arthropod phospholipase D family. Class II subfamily. The cofactor is Mg(2+). In terms of tissue distribution, expressed by the venom gland.

The protein localises to the secreted. It carries out the reaction an N-(acyl)-sphingosylphosphocholine = an N-(acyl)-sphingosyl-1,3-cyclic phosphate + choline. The enzyme catalyses an N-(acyl)-sphingosylphosphoethanolamine = an N-(acyl)-sphingosyl-1,3-cyclic phosphate + ethanolamine. It catalyses the reaction a 1-acyl-sn-glycero-3-phosphocholine = a 1-acyl-sn-glycero-2,3-cyclic phosphate + choline. The catalysed reaction is a 1-acyl-sn-glycero-3-phosphoethanolamine = a 1-acyl-sn-glycero-2,3-cyclic phosphate + ethanolamine. Functionally, dermonecrotic toxins cleave the phosphodiester linkage between the phosphate and headgroup of certain phospholipids (sphingolipid and lysolipid substrates), forming an alcohol (often choline) and a cyclic phosphate. This toxin acts on sphingomyelin (SM). It may also act on ceramide phosphoethanolamine (CPE), lysophosphatidylcholine (LPC) and lysophosphatidylethanolamine (LPE), but not on lysophosphatidylserine (LPS), and lysophosphatidylglycerol (LPG). It acts by transphosphatidylation, releasing exclusively cyclic phosphate products as second products. Induces dermonecrosis, hemolysis, increased vascular permeability, edema, inflammatory response, and platelet aggregation. This is Dermonecrotic toxin SpeSicTox-betaIIA2v from Sicarius peruensis (Six-eyed sand spider).